Reading from the N-terminus, the 332-residue chain is tRNA dimethylallyltransferase (332 aa).

17–24 is a binding site for ATP; sequence GPTCSGKS. 19 to 24 contributes to the substrate binding site; it reads TCSGKS. Interaction with substrate tRNA regions lie at residues 42–45 and 166–170; these read DSMQ and QRVAR.

Belongs to the IPP transferase family. As to quaternary structure, monomer. The cofactor is Mg(2+).

It catalyses the reaction adenosine(37) in tRNA + dimethylallyl diphosphate = N(6)-dimethylallyladenosine(37) in tRNA + diphosphate. Catalyzes the transfer of a dimethylallyl group onto the adenine at position 37 in tRNAs that read codons beginning with uridine, leading to the formation of N6-(dimethylallyl)adenosine (i(6)A). The sequence is that of tRNA dimethylallyltransferase from Gluconacetobacter diazotrophicus (strain ATCC 49037 / DSM 5601 / CCUG 37298 / CIP 103539 / LMG 7603 / PAl5).